The following is a 308-amino-acid chain: Cytochrome b (308 aa).

The next 4 membrane-spanning stretches (helical) occupy residues 1–21 (FGSL…LMAM), 45–66 (WLIR…YLHI), 81–101 (WNTG…GYVL), and 146–166 (FFAL…VHLT). Residues His-51 and His-65 each coordinate heme b. His-150 and His-164 together coordinate heme b. His-169 contacts a ubiquinone. The next 3 membrane-spanning stretches (helical) occupy residues 194–214 (IKDI…AMFS), 256–276 (LGGV…PFLH), and 288–308 (LSQL…WVGS).

This sequence belongs to the cytochrome b family. As to quaternary structure, the cytochrome bc1 complex contains 11 subunits: 3 respiratory subunits (MT-CYB, CYC1 and UQCRFS1), 2 core proteins (UQCRC1 and UQCRC2) and 6 low-molecular weight proteins (UQCRH/QCR6, UQCRB/QCR7, UQCRQ/QCR8, UQCR10/QCR9, UQCR11/QCR10 and a cleavage product of UQCRFS1). This cytochrome bc1 complex then forms a dimer. Heme b is required as a cofactor.

It localises to the mitochondrion inner membrane. Its function is as follows. Component of the ubiquinol-cytochrome c reductase complex (complex III or cytochrome b-c1 complex) that is part of the mitochondrial respiratory chain. The b-c1 complex mediates electron transfer from ubiquinol to cytochrome c. Contributes to the generation of a proton gradient across the mitochondrial membrane that is then used for ATP synthesis. In Scytalopus magellanicus (Magellanic tapaculo), this protein is Cytochrome b (MT-CYB).